The primary structure comprises 386 residues: Methionine aminopeptidase 1 (386 aa).

An N-acetylalanine modification is found at A2. The segment at 6-59 (TRVCETDGCSSEAKLQCPTCIKLGIQGSYFCSQECFKGSWATHKLLHKKAKDEK) adopts a C6H2-type zinc-finger fold. Zn(2+)-binding residues include C9, C14, C22, C25, C36, C40, H48, and H52. A protein is bound at residue H203. D220, D231, and H294 together coordinate Zn(2+). H301 provides a ligand contact to a protein. The Zn(2+) site is built by E327 and E358.

Belongs to the peptidase M24A family. Methionine aminopeptidase type 1 subfamily. In terms of assembly, associates with the 60S ribosomal subunit of the 80S translational complex. It depends on Zn(2+) as a cofactor. Co(2+) serves as cofactor. The cofactor is Mn(2+). Requires Fe(2+) as cofactor.

It is found in the cytoplasm. It catalyses the reaction Release of N-terminal amino acids, preferentially methionine, from peptides and arylamides.. Functionally, cotranslationally removes the N-terminal methionine from nascent proteins. The N-terminal methionine is often cleaved when the second residue in the primary sequence is small and uncharged (Met-Ala-, Cys, Gly, Pro, Ser, Thr, or Val). Required for normal progression through the cell cycle. This chain is Methionine aminopeptidase 1 (METAP1), found in Homo sapiens (Human).